Reading from the N-terminus, the 584-residue chain is Arginine--tRNA ligase (584 aa).

Residues 125 to 135 (PNIAKEMHVGH) carry the 'HIGH' region motif.

This sequence belongs to the class-I aminoacyl-tRNA synthetase family. As to quaternary structure, monomer.

It is found in the cytoplasm. It catalyses the reaction tRNA(Arg) + L-arginine + ATP = L-arginyl-tRNA(Arg) + AMP + diphosphate. The protein is Arginine--tRNA ligase of Thermosynechococcus vestitus (strain NIES-2133 / IAM M-273 / BP-1).